The primary structure comprises 379 residues: Na(+)/H(+) antiporter NhaA (379 aa).

12 helical membrane passes run 14-34 (AGGI…NTPL), 59-79 (LLMW…GMEV), 95-115 (VFPA…FLVF), 125-145 (GWAI…ALLG), 154-174 (IFLL…IALF), 175-195 (FSHD…AILI), 200-220 (LKIT…ASVL), 221-241 (KSGV…PLNG), 261-281 (FAIL…GMGM), 292-312 (IALG…FVAV), 328-348 (IFAV…LAGL), and 359-379 (VTAL…VLGY).

This sequence belongs to the NhaA Na(+)/H(+) (TC 2.A.33) antiporter family.

Its subcellular location is the cell inner membrane. The enzyme catalyses Na(+)(in) + 2 H(+)(out) = Na(+)(out) + 2 H(+)(in). In terms of biological role, na(+)/H(+) antiporter that extrudes sodium in exchange for external protons. The chain is Na(+)/H(+) antiporter NhaA from Pasteurella multocida (strain Pm70).